The chain runs to 242 residues: Probable ABC transporter ATP-binding protein PEB1C (242 aa).

Residues 2–236 (IELKNVNKYY…PKTERARLFL (235 aa)) form the ABC transporter domain. Position 34–41 (34–41 (GPSGSGKS)) interacts with ATP.

The protein belongs to the ABC transporter superfamily.

The protein resides in the cell inner membrane. Most probably involved, with PEB1, in a binding-protein-dependent transport system for an amino acid. Probably responsible for energy coupling to the transport system. In Campylobacter jejuni subsp. jejuni serotype O:23/36 (strain 81-176), this protein is Probable ABC transporter ATP-binding protein PEB1C (peb1C).